A 355-amino-acid polypeptide reads, in one-letter code: Alanine racemase (355 aa).

The active-site Proton acceptor; specific for D-alanine is K34. N6-(pyridoxal phosphate)lysine is present on K34. R133 contributes to the substrate binding site. Residue Y249 is the Proton acceptor; specific for L-alanine of the active site. Position 297 (M297) interacts with substrate.

This sequence belongs to the alanine racemase family. Pyridoxal 5'-phosphate serves as cofactor.

It catalyses the reaction L-alanine = D-alanine. The protein operates within amino-acid biosynthesis; D-alanine biosynthesis; D-alanine from L-alanine: step 1/1. Its function is as follows. Catalyzes the interconversion of L-alanine and D-alanine. May also act on other amino acids. In Rickettsia africae (strain ESF-5), this protein is Alanine racemase (alr).